The following is an 809-amino-acid chain: Trimethylamine-N-oxide reductase 2 (809 aa).

A signal peptide (tat-type signal) is located at residues 1-31 (MTLTRREFIKHSGIAAGTLVVTSAAPLPAWA). S176 contacts Mo-bis(molybdopterin guanine dinucleotide).

Belongs to the prokaryotic molybdopterin-containing oxidoreductase family. Mo-bis(molybdopterin guanine dinucleotide) is required as a cofactor. Post-translationally, predicted to be exported by the Tat system. The position of the signal peptide cleavage has not been experimentally proven.

It localises to the periplasm. It carries out the reaction trimethylamine + 2 Fe(III)-[cytochrome c] + H2O = trimethylamine N-oxide + 2 Fe(II)-[cytochrome c] + 3 H(+). Functionally, reduces trimethylamine-N-oxide (TMAO) into trimethylamine; an anaerobic reaction coupled to energy-yielding reactions. Can also reduce other N- and S-oxide compounds such as 4-methylmorpholine-N-oxide and biotin sulfoxide (BSO), but with a lower catalytic efficiency. This Escherichia coli O6:H1 (strain CFT073 / ATCC 700928 / UPEC) protein is Trimethylamine-N-oxide reductase 2 (torZ).